The chain runs to 119 residues: Large ribosomal subunit protein bL19 (119 aa).

The protein belongs to the bacterial ribosomal protein bL19 family.

This protein is located at the 30S-50S ribosomal subunit interface and may play a role in the structure and function of the aminoacyl-tRNA binding site. The sequence is that of Large ribosomal subunit protein bL19 from Arthrobacter sp. (strain FB24).